The sequence spans 504 residues: Sodium-coupled neutral amino acid transporter 3 (504 aa).

A Phosphoserine; by PKC modification is found at Ser-52. Asn-73 carries N-linked (GlcNAc...) asparagine glycosylation. Transmembrane regions (helical) follow at residues 82-102 (GILG…LFLL), 105-125 (VALL…IVGI), 143-163 (AAAL…LYII), 186-206 (MDGN…LALM), and 212-232 (LGYS…AVIY). A disulfide bridge connects residues Cys-239 and Cys-275. N-linked (GlcNAc...) asparagine glycosylation is found at Asn-247 and Asn-251. A helical transmembrane segment spans residues 287-307 (AYTIPIMAFAFVCHPEVLPIY). N-linked (GlcNAc...) asparagine glycosylation is present at Asn-323. The next 5 membrane-spanning stretches (helical) occupy residues 324–344 (LSIA…YLTF), 366–386 (ILCV…IVLF), 408–428 (VLIA…APNI), 431–451 (IFGI…PAIF), and 469–489 (ILAL…LSFI).

It belongs to the amino acid/polyamine transporter 2 family. Phosphorylation at Ser-52 induces internalization and sequestration into an intracellular reservoir. During dephosphorylation by protein phosphatases, can recycle back to the plasma membrane and regain activity. Prolonged phosphorylation results in its degradation. In terms of tissue distribution, highly expressed in liver. Expressed in skeletal muscle. Expressed in kidney, heart and brain. Not detected in gut, lung or spleen. Expressed ubiquitously in hepatocytes in liver whereas in kidney expression is restricted to the medulla. Within brain, expressed in glial cells. In the cerebellum, expressed on Bergmann glial fibers in the molecular layer and astrocytes in the granule layer. Expressed in brain kidney and liver (at protein level). In the adult kidney, highly expressed in the outer strip of the outer medulla and medullary rays penetrating into the kidney cortex (at protein level).

It localises to the cell membrane. The protein resides in the basolateral cell membrane. The enzyme catalyses L-glutamine(out) + Na(+)(out) + H(+)(in) = L-glutamine(in) + Na(+)(in) + H(+)(out). The catalysed reaction is L-asparagine(out) + Na(+)(out) + H(+)(in) = L-asparagine(in) + Na(+)(in) + H(+)(out). It carries out the reaction L-histidine(out) + Na(+)(out) + H(+)(in) = L-histidine(in) + Na(+)(in) + H(+)(out). L-glutamine efflux and L-glutamine uptake are regulated by CO2/HCO3(-) through SLC4A4 leading to modulation of cytosolic pH and Na(+)concentration. Its function is as follows. Symporter that cotransports specific neutral amino acids and sodium ions, coupled to an H(+) antiporter activity. Mainly participates in the glutamate-GABA-glutamine cycle in brain where it transports L-glutamine from astrocytes in the intercellular space for the replenishment of both neurotransmitters glutamate and gamma-aminobutyric acid (GABA) in neurons. Also functions as the major influx transporter in ganglion cells mediating the uptake of glutamine. The transport activity is specific for L-glutamine, L-histidine and L-asparagine. The transport is electroneutral coupled to the cotransport of 1 Na(+) and the antiport of 1 H(+), pH dependent, saturable, Li(+) tolerant and functions in both direction depending on the concentration gradients of its substrates and cotransported ions. Also mediates an amino acid-gated H(+) conductance that is not stoichiometrically coupled to the amino acid transport but which influences the ionic gradients that drive the amino acid transport. In addition, may play a role in nitrogen metabolism, amino acid homeostasis, glucose metabolism and renal ammoniagenesis. The protein is Sodium-coupled neutral amino acid transporter 3 of Rattus norvegicus (Rat).